Reading from the N-terminus, the 178-residue chain is Protein GrpE (178 aa).

A compositionally biased stretch (pro residues) spans 1-11 (MSENQNPPPSP). The tract at residues 1–23 (MSENQNPPPSPEEIEAAMSANAA) is disordered.

Belongs to the GrpE family. As to quaternary structure, homodimer.

It is found in the cytoplasm. Its function is as follows. Participates actively in the response to hyperosmotic and heat shock by preventing the aggregation of stress-denatured proteins, in association with DnaK and GrpE. It is the nucleotide exchange factor for DnaK and may function as a thermosensor. Unfolded proteins bind initially to DnaJ; upon interaction with the DnaJ-bound protein, DnaK hydrolyzes its bound ATP, resulting in the formation of a stable complex. GrpE releases ADP from DnaK; ATP binding to DnaK triggers the release of the substrate protein, thus completing the reaction cycle. Several rounds of ATP-dependent interactions between DnaJ, DnaK and GrpE are required for fully efficient folding. The protein is Protein GrpE of Acidovorax sp. (strain JS42).